Consider the following 515-residue polypeptide: Leucine-rich repeat transmembrane neuronal protein 2 (515 aa).

A signal peptide spans 1–33 (MGLHFKWPLGAPMLAAIYAMSVVLKMLPALGMA). At 34–421 (CPPKCRCEKL…EPDNAIFTQR (388 aa)) the chain is on the extracellular side. A glycan (N-linked (GlcNAc...) asparagine) is linked at asparagine 57. 10 LRR repeats span residues 61-83 (KGSL…QFAS), 84-107 (FSQL…AFQG), 109-131 (YKLK…TFTQ), 132-155 (LINL…LFYG), 156-179 (LRKL…LFWD), 181-203 (RSLE…GFAG), 205-227 (IKLR…HFLR), 229-251 (SSLH…MEWT), 252-275 (WSTL…VFET), and 276-299 (MPNL…ILSS). A glycan (N-linked (GlcNAc...) asparagine) is linked at asparagine 126. Asparagine 243 is a glycosylation site (N-linked (GlcNAc...) asparagine). Asparagine 362 is a glycosylation site (N-linked (GlcNAc...) asparagine). Residues 422-442 (VITGTMALLFSFFFIIFIVFI) form a helical membrane-spanning segment. The Cytoplasmic portion of the chain corresponds to 443–515 (SRKCCPPTLR…QQLPYKECEV (73 aa)). An Involved in DLG4-binding motif is present at residues 512–515 (ECEV).

This sequence belongs to the LRRTM family. In terms of assembly, interacts with DLG4. Interacts with neurexin NRXN1; interaction is mediated by heparan sulfate glycan modification on neurexin. Expressed in neuronal tissues. Widely distributed in neuropil regions in discrete puncta throughout the brain (at protein level). Detected in cortex, thalamus, striatum, olfactory bulb, cerebellum and all hippocampal subfields (at protein level). More abundant in deep than in superficial layers of neocortex (at protein level).

The protein resides in the cell membrane. Its subcellular location is the postsynaptic cell membrane. Involved in the development and maintenance of excitatory synapses in the nervous system. Regulates surface expression of AMPA receptors and instructs the development of functional glutamate release sites. Acts as a ligand for the presynaptic receptors NRXN1-A and NRXN1-B. The sequence is that of Leucine-rich repeat transmembrane neuronal protein 2 (Lrrtm2) from Rattus norvegicus (Rat).